Reading from the N-terminus, the 365-residue chain is UDP-N-acetylglucosamine--N-acetylmuramyl-(pentapeptide) pyrophosphoryl-undecaprenol N-acetylglucosamine transferase (365 aa).

Residues 10–12, asparagine 124, arginine 161, serine 195, isoleucine 248, and glutamine 292 contribute to the UDP-N-acetyl-alpha-D-glucosamine site; that span reads TAG.

It belongs to the glycosyltransferase 28 family. MurG subfamily.

The protein resides in the cell membrane. It carries out the reaction di-trans,octa-cis-undecaprenyl diphospho-N-acetyl-alpha-D-muramoyl-L-alanyl-D-glutamyl-meso-2,6-diaminopimeloyl-D-alanyl-D-alanine + UDP-N-acetyl-alpha-D-glucosamine = di-trans,octa-cis-undecaprenyl diphospho-[N-acetyl-alpha-D-glucosaminyl-(1-&gt;4)]-N-acetyl-alpha-D-muramoyl-L-alanyl-D-glutamyl-meso-2,6-diaminopimeloyl-D-alanyl-D-alanine + UDP + H(+). It functions in the pathway cell wall biogenesis; peptidoglycan biosynthesis. Cell wall formation. Catalyzes the transfer of a GlcNAc subunit on undecaprenyl-pyrophosphoryl-MurNAc-pentapeptide (lipid intermediate I) to form undecaprenyl-pyrophosphoryl-MurNAc-(pentapeptide)GlcNAc (lipid intermediate II). The chain is UDP-N-acetylglucosamine--N-acetylmuramyl-(pentapeptide) pyrophosphoryl-undecaprenol N-acetylglucosamine transferase from Nocardioides sp. (strain ATCC BAA-499 / JS614).